Here is a 449-residue protein sequence, read N- to C-terminus: CBL-interacting protein kinase 31 (449 aa).

Positions 20–275 constitute a Protein kinase domain; it reads YELGRTIGEG…ISQILEDPWF (256 aa). Residues 26–34 and K49 each bind ATP; that span reads IGEGTFAKV. D143 acts as the Proton acceptor in catalysis. Positions 161–190 are activation loop; that stretch reads DFGLSALTEQVKADGLLHTTCGTPNYVAPE. Residues 313 to 337 form the NAF domain; the sequence is DQPTSMNAFELISLNQALNLDNLFE.

It belongs to the protein kinase superfamily. CAMK Ser/Thr protein kinase family. SNF1 subfamily. May interact with CBL3. The cofactor is Mn(2+). Autophosphorylated. As to expression, highly expressed in leaf blade and leaf sheath, but not in other tissues.

It catalyses the reaction L-seryl-[protein] + ATP = O-phospho-L-seryl-[protein] + ADP + H(+). The enzyme catalyses L-threonyl-[protein] + ATP = O-phospho-L-threonyl-[protein] + ADP + H(+). Functionally, involved in cold stress tolerance. CIPK serine-threonine protein kinases interact with CBL proteins. Binding of a CBL protein to the regulatory NAF domain of CIPK protein lead to the activation of the kinase in a calcium-dependent manner. In Oryza sativa subsp. japonica (Rice), this protein is CBL-interacting protein kinase 31 (CIPK31).